Reading from the N-terminus, the 343-residue chain is Trans-enoyl reductase ACTTS2 (343 aa).

42 to 45 serves as a coordination point for NADP(+); the sequence is GDWK. A substrate-binding site is contributed by 128-135; the sequence is VGITTVGQ. NADP(+)-binding positions include 162–165, 185–188, and Tyr203; these read STAT and SPHN. Residue 268–272 participates in substrate binding; the sequence is GYTAL. An NADP(+)-binding site is contributed by 333–334; that stretch reads VS.

This sequence belongs to the zinc-containing alcohol dehydrogenase family. Monomer.

It participates in mycotoxin biosynthesis. Functionally, trans-enoyl reductase; part of the gene clusters that mediate the biosynthesis of the host-selective toxins (HSTs) ACT-toxins responsible for brown spot of tangerine disease by the tangerine pathotype which affects tangerines and mandarins. ACT-toxins consist of three moieties, 9,10-epoxy-8-hydroxy-9-methyl-decatrienoic acid (EDA), valine and a polyketide. ACT-toxin I is toxic to both citrus and pear; toxin II the 5''-deoxy derivative of ACT-toxin I, is highly toxic to pear and slightly toxic to citrus. On cellular level, ACT-toxins affect plasma membrane of susceptible cells and cause a sudden increase in loss of K(+) after a few minutes of toxin treatment. The acyl-CoA ligase ACTT1, the hydrolase ACTT2, the enoyl-CoA hydratases ACTT3 and ACTT6, and the acyl-CoA synthetase ACTT5 are all involved in the biosynthesis of the AK-, AF- and ACT-toxin common 9,10-epoxy-8-hydroxy-9-methyl-decatrienoic acid (EDA) structural moiety. The exact role of each enzyme, and of additional enzymes identified within the AF-toxin clusters have still to be determined. On the other hand, ACTTS1 to ACTTS4 are specific to the tangerine pathotype. The function of ACTTS3 is to elongate the polyketide chain portion of ACT-toxin that is unique to this toxin. The enoyl-reductase ACTTS2 might complement the missing enoyl-reductase (ER) domain in ACTTS3 in the synthesis of the polyketide portion of ACT-toxin. The roles of the nonribosomal peptide synthetases-related proteins ACTTS1 and ACTTS4 have also still not been elucidated. The protein is Trans-enoyl reductase ACTTS2 of Alternaria alternata (Alternaria rot fungus).